The primary structure comprises 230 residues: Eukaryotic translation initiation factor 4E-1 (230 aa).

Positions 1 to 53 are disordered; it reads MVVEDSQKSTITDEQNPSRVDNDDDDLEDGEILEDADDAASAASKPPSAFLRN. Residues 8–19 are compositionally biased toward polar residues; sequence KSTITDEQNPSR. The span at 22–38 shows a compositional bias: acidic residues; sequence NDDDDLEDGEILEDADD. Positions 39 to 49 are enriched in low complexity; the sequence is AASAASKPPSA. 2 EIF4G-binding regions span residues 55–58 and 65–101; these read HPLE and FDNP…NNIH. Residues 73–78, Lys-105, and 123–124 contribute to the mRNA site; these read KQAAWG and WE. Cys-128 and Cys-166 are oxidised to a cystine. Residues 149–158 are EIF4G-binding; sequence YTLLAMIGEQ. MRNA contacts are provided by residues 173–178 and 218–222; these read RNRQDK and KKHER.

This sequence belongs to the eukaryotic initiation factor 4E family. In terms of assembly, EIF4F is a multi-subunit complex, the composition of which varies with external and internal environmental conditions. It is composed of at least EIF4A, EIF4E and EIF4G. EIF4E is also known to interact with other partners. In higher plants two isoforms of EIF4F have been identified, named isoform EIF4F and isoform EIF(iso)4F. Isoform EIF4F has subunits p220 and p26, whereas isoform EIF(iso)4F has subunits p82 and p28. (Microbial infection) Interacts with potyvirus viral genome-linked protein (VPg); this interaction is possible in susceptible hosts but impaired in resistant plants. Post-translationally, according to the redox status, the Cys-128-Cys-166 disulfide bridge may have a role in regulating protein function by affecting its ability to bind capped mRNA.

Its subcellular location is the nucleus. The protein resides in the cytoplasm. In terms of biological role, component of the protein complex eIF4F, which is involved in the recognition of the mRNA cap, ATP-dependent unwinding of 5'-terminal secondary structure and recruitment of mRNA to the ribosome. Recognizes and binds the 7-methylguanosine-containing mRNA cap during an early step in the initiation of protein synthesis and facilitates ribosome binding by inducing the unwinding of the mRNAs secondary structures. Key component of recessive resistance to potyviruses. Its function is as follows. (Microbial infection) Susceptibility host factor required for viral infection by recruiting viral RNAs to the host ribosomal complex via an interaction with viral genome-linked protein (VPg). The protein is Eukaryotic translation initiation factor 4E-1 of Phaseolus vulgaris (Kidney bean).